The chain runs to 98 residues: Signal peptidase complex subunit 1 (98 aa).

Topologically, residues 1–18 are cytoplasmic; it reads MLDIQTHMDFAGQGKAER. A helical transmembrane segment spans residues 19–38; it reads WSRFIITFFGIVGLVYGAFV. Topologically, residues 39–42 are lumenal; sequence QQFS. A helical membrane pass occupies residues 43 to 65; it reads QTVYILGAGFVLSSLITIPPWPL. Residues 66–98 are Cytoplasmic-facing; the sequence is YRRNALKWQKPIDTDAKSSSSESGDEGKKKKKQ. The tract at residues 78–98 is disordered; it reads DTDAKSSSSESGDEGKKKKKQ. 4 positions are modified to phosphoserine: Ser-84, Ser-85, Ser-86, and Ser-88.

The protein belongs to the SPCS1 family. In terms of assembly, component of the signal peptidase complex (SPC) composed of a catalytic subunit twr/SEC11 and three accessory subunits Spase12/SPCS1, Spase25/SPCS2 and Spase22-23/SPCS3. The complex induces a local thinning of the ER membrane which is used to measure the length of the signal peptide (SP) h-region of protein substrates. This ensures the selectivity of the complex towards h-regions shorter than 18-20 amino acids.

Its subcellular location is the endoplasmic reticulum membrane. In terms of biological role, component of the signal peptidase complex (SPC) which catalyzes the cleavage of N-terminal signal sequences from nascent proteins as they are translocated into the lumen of the endoplasmic reticulum. Dispensable for SPC enzymatic activity. Its function is as follows. (Microbial infection) Plays an important role in infection by flaviviruses such as West Nile virus and Dengue virus type 2. This is Signal peptidase complex subunit 1 (Spase12) from Drosophila melanogaster (Fruit fly).